The sequence spans 314 residues: Methionyl-tRNA formyltransferase (314 aa).

112–115 (SLLP) is a (6S)-5,6,7,8-tetrahydrofolate binding site.

The protein belongs to the Fmt family.

It carries out the reaction L-methionyl-tRNA(fMet) + (6R)-10-formyltetrahydrofolate = N-formyl-L-methionyl-tRNA(fMet) + (6S)-5,6,7,8-tetrahydrofolate + H(+). In terms of biological role, attaches a formyl group to the free amino group of methionyl-tRNA(fMet). The formyl group appears to play a dual role in the initiator identity of N-formylmethionyl-tRNA by promoting its recognition by IF2 and preventing the misappropriation of this tRNA by the elongation apparatus. In Legionella pneumophila subsp. pneumophila (strain Philadelphia 1 / ATCC 33152 / DSM 7513), this protein is Methionyl-tRNA formyltransferase.